A 172-amino-acid polypeptide reads, in one-letter code: Putative phosphoesterase BCG9842_B4061 (172 aa).

Histidine 34 (proton donor) is an active-site residue. 2 consecutive short sequence motifs (HXTX) follow at residues 34–37 (HITL) and 115–118 (HLTI). Histidine 115 functions as the Proton acceptor in the catalytic mechanism.

Belongs to the 2H phosphoesterase superfamily. YjcG family.

This is Putative phosphoesterase BCG9842_B4061 from Bacillus cereus (strain G9842).